Consider the following 528-residue polypeptide: Beta-galactoside alpha-2,6-sialyltransferase 2 (528 aa).

Residues 1–10 are Cytoplasmic-facing; it reads MKPNLKQWKQ. The helical; Signal-anchor for type II membrane protein transmembrane segment at 11–31 threads the bilayer; that stretch reads LMLFGIFAWGLLFLVIFIYFT. At 32 to 528 the chain is on the lumenal side; that stretch reads DSNSAEPVPS…CPERNNFPPL (497 aa). Asn167, Asn308, and Asn338 each carry an N-linked (GlcNAc...) asparagine glycan. 3 disulfides stabilise this stretch: Cys254-Cys519, Cys297-Cys448, and Cys466-Cys477.

It belongs to the glycosyltransferase 29 family.

The protein localises to the golgi apparatus. It localises to the golgi stack membrane. The enzyme catalyses a beta-D-galactoside + CMP-N-acetyl-beta-neuraminate = an N-acetyl-alpha-neuraminyl-(2-&gt;6)-beta-D-galactosyl derivative + CMP + H(+). In terms of biological role, transfers sialic acid from the donor of substrate CMP-sialic acid to galactose containing acceptor substrates. The sequence is that of Beta-galactoside alpha-2,6-sialyltransferase 2 (ST6GAL2) from Gallus gallus (Chicken).